The sequence spans 130 residues: Small ribosomal subunit protein uS9 (130 aa).

The protein belongs to the universal ribosomal protein uS9 family.

The chain is Small ribosomal subunit protein uS9 from Cupriavidus pinatubonensis (strain JMP 134 / LMG 1197) (Cupriavidus necator (strain JMP 134)).